Reading from the N-terminus, the 332-residue chain is Ribosomal RNA small subunit methyltransferase C (332 aa).

This sequence belongs to the methyltransferase superfamily. RsmC family. In terms of assembly, monomer.

It is found in the cytoplasm. The enzyme catalyses guanosine(1207) in 16S rRNA + S-adenosyl-L-methionine = N(2)-methylguanosine(1207) in 16S rRNA + S-adenosyl-L-homocysteine + H(+). In terms of biological role, specifically methylates the guanine in position 1207 of 16S rRNA in the 30S particle. This Pseudomonas putida (strain GB-1) protein is Ribosomal RNA small subunit methyltransferase C.